A 523-amino-acid chain; its full sequence is Glycerate kinase (523 aa).

Serine 60 carries the phosphoserine modification. Residue lysine 200 is modified to N6-acetyllysine.

This sequence belongs to the glycerate kinase type-2 family. As to expression, expressed in the hippocampus, callus, brain, cerebellum, renal cortex interstitial cells, epithelium of interlobular bile duct and skeletal muscle.

It localises to the cytoplasm. The enzyme catalyses (R)-glycerate + ATP = (2R)-3-phosphoglycerate + ADP + H(+). The polypeptide is Glycerate kinase (Glyctk) (Mus musculus (Mouse)).